A 303-amino-acid chain; its full sequence is Pyridoxal 5'-phosphate synthase subunit PdxS (303 aa).

Aspartate 33 provides a ligand contact to D-ribose 5-phosphate. The active-site Schiff-base intermediate with D-ribose 5-phosphate is lysine 90. Glycine 162 contacts D-ribose 5-phosphate. Residue arginine 174 coordinates D-glyceraldehyde 3-phosphate. Residues glycine 223 and glycine 244–serine 245 each bind D-ribose 5-phosphate.

It belongs to the PdxS/SNZ family. In the presence of PdxT, forms a dodecamer of heterodimers.

It catalyses the reaction aldehydo-D-ribose 5-phosphate + D-glyceraldehyde 3-phosphate + L-glutamine = pyridoxal 5'-phosphate + L-glutamate + phosphate + 3 H2O + H(+). It participates in cofactor biosynthesis; pyridoxal 5'-phosphate biosynthesis. Its function is as follows. Catalyzes the formation of pyridoxal 5'-phosphate from ribose 5-phosphate (RBP), glyceraldehyde 3-phosphate (G3P) and ammonia. The ammonia is provided by the PdxT subunit. Can also use ribulose 5-phosphate and dihydroxyacetone phosphate as substrates, resulting from enzyme-catalyzed isomerization of RBP and G3P, respectively. This Mycolicibacterium smegmatis (strain ATCC 700084 / mc(2)155) (Mycobacterium smegmatis) protein is Pyridoxal 5'-phosphate synthase subunit PdxS.